Here is a 176-residue protein sequence, read N- to C-terminus: Crossover junction endodeoxyribonuclease RuvC (176 aa).

Residues Asp10, Glu69, and Asp141 contribute to the active site. Mg(2+) contacts are provided by Asp10, Glu69, and Asp141.

It belongs to the RuvC family. In terms of assembly, homodimer which binds Holliday junction (HJ) DNA. The HJ becomes 2-fold symmetrical on binding to RuvC with unstacked arms; it has a different conformation from HJ DNA in complex with RuvA. In the full resolvosome a probable DNA-RuvA(4)-RuvB(12)-RuvC(2) complex forms which resolves the HJ. The cofactor is Mg(2+).

The protein localises to the cytoplasm. The enzyme catalyses Endonucleolytic cleavage at a junction such as a reciprocal single-stranded crossover between two homologous DNA duplexes (Holliday junction).. Functionally, the RuvA-RuvB-RuvC complex processes Holliday junction (HJ) DNA during genetic recombination and DNA repair. Endonuclease that resolves HJ intermediates. Cleaves cruciform DNA by making single-stranded nicks across the HJ at symmetrical positions within the homologous arms, yielding a 5'-phosphate and a 3'-hydroxyl group; requires a central core of homology in the junction. The consensus cleavage sequence is 5'-(A/T)TT(C/G)-3'. Cleavage occurs on the 3'-side of the TT dinucleotide at the point of strand exchange. HJ branch migration catalyzed by RuvA-RuvB allows RuvC to scan DNA until it finds its consensus sequence, where it cleaves and resolves the cruciform DNA. This Dichelobacter nodosus (strain VCS1703A) protein is Crossover junction endodeoxyribonuclease RuvC.